Reading from the N-terminus, the 305-residue chain is DNA-directed RNA polymerase 35 kDa subunit (305 aa).

This sequence belongs to the poxviridae DNA-directed RNA polymerase 35 kDa subunit family. As to quaternary structure, the DNA-dependent RNA polymerase used for intermediate and late genes expression consists of eight subunits 147 kDa, 133 kDa, 35 kDa, 30 kDa, 22 kDa, 19 kDa, 18 kDa and 7 kDa totalling more than 500 kDa in mass. The same holoenzyme, with the addition of the transcription-specificity factor RAP94, is used for early gene expression.

Its subcellular location is the virion. The enzyme catalyses RNA(n) + a ribonucleoside 5'-triphosphate = RNA(n+1) + diphosphate. Its function is as follows. Part of the DNA-dependent RNA polymerase which catalyzes the transcription of viral DNA into RNA using the four ribonucleoside triphosphates as substrates. Responsible for the transcription of early, intermediate and late genes. DNA-dependent RNA polymerase associates with the early transcription factor (ETF), itself composed of D6 and A7, thereby allowing the early genes transcription. Late transcription, and probably also intermediate transcription, require newly synthesized RNA polymerase. This chain is DNA-directed RNA polymerase 35 kDa subunit (OPG156), found in Homo sapiens (Human).